Here is a 72-residue protein sequence, read N- to C-terminus: MSCCGGSCGCGSGCKCGSGCGGCGMYPDMEKSTTFTIIEGVAPINNYGNVEEKAAGEGCKCGSNCTCDPCNC.

The protein belongs to the metallothionein superfamily. Type 15 family. In terms of tissue distribution, leaves and roots.

In terms of biological role, metallothioneins have a high content of cysteine residues that bind various heavy metals. This chain is Metallothionein-like protein type 2 A (MTA), found in Solanum lycopersicum (Tomato).